We begin with the raw amino-acid sequence, 43 residues long: Protein PsbN (43 aa).

The helical transmembrane segment at 5-27 (TLVAISISCLLVSFTGYALYTAF) threads the bilayer.

The protein belongs to the PsbN family.

The protein localises to the plastid. Its subcellular location is the chloroplast thylakoid membrane. In terms of biological role, may play a role in photosystem I and II biogenesis. This is Protein PsbN from Cryptomeria japonica (Japanese cedar).